A 467-amino-acid chain; its full sequence is 26S proteasome regulatory subunit 7 homolog (467 aa).

Disordered stretches follow at residues 1–26 and 108–140; these read MPPKEDWEKYKAPLEDDDKKPDDDKI and GNGESDETTTDNNNSGNSNSNSNQQSTDADEDD. Residues 117–134 show a composition bias toward low complexity; that stretch reads TDNNNSGNSNSNSNQQST. 2 positions are modified to phosphoserine: Ser164 and Ser231. 250–257 contributes to the ATP binding site; the sequence is GPPGTGKT.

Belongs to the AAA ATPase family. In terms of assembly, interacts with UBR1 and CIC1. The N-terminus is blocked.

Its subcellular location is the cytoplasm. It localises to the nucleus. Functionally, the 26S proteasome is involved in the ATP-dependent degradation of ubiquitinated proteins. The regulatory (or ATPase) complex confers ATP dependency and substrate specificity to the 26S complex. The chain is 26S proteasome regulatory subunit 7 homolog (RPT1) from Saccharomyces cerevisiae (strain ATCC 204508 / S288c) (Baker's yeast).